The chain runs to 382 residues: Chaperone protein DnaJ (382 aa).

The region spanning D5 to G70 is the J domain. Residues G141–E219 form a CR-type zinc finger. Positions 154, 157, 171, 174, 193, 196, 207, and 210 each coordinate Zn(2+). CXXCXGXG motif repeat units lie at residues C154–G161, C171–G178, C193–G200, and C207–G214.

Belongs to the DnaJ family. As to quaternary structure, homodimer. Requires Zn(2+) as cofactor.

It is found in the cytoplasm. Functionally, participates actively in the response to hyperosmotic and heat shock by preventing the aggregation of stress-denatured proteins and by disaggregating proteins, also in an autonomous, DnaK-independent fashion. Unfolded proteins bind initially to DnaJ; upon interaction with the DnaJ-bound protein, DnaK hydrolyzes its bound ATP, resulting in the formation of a stable complex. GrpE releases ADP from DnaK; ATP binding to DnaK triggers the release of the substrate protein, thus completing the reaction cycle. Several rounds of ATP-dependent interactions between DnaJ, DnaK and GrpE are required for fully efficient folding. Also involved, together with DnaK and GrpE, in the DNA replication of plasmids through activation of initiation proteins. The chain is Chaperone protein DnaJ from Cereibacter sphaeroides (strain ATCC 17029 / ATH 2.4.9) (Rhodobacter sphaeroides).